Here is a 118-residue protein sequence, read N- to C-terminus: Protein MGF 110-6L (118 aa).

The first 18 residues, Met-1 to Ser-18, serve as a signal peptide directing secretion. N-linked (GlcNAc...) asparagine; by host glycosylation occurs at Asn-96. The short motif at Lys-115–Leu-118 is the Prevents secretion from ER element.

This sequence belongs to the asfivirus MGF 110 family. Post-translationally, N-glycosylated.

The protein resides in the host endoplasmic reticulum lumen. Functionally, plays a role in virus cell tropism, and may be required for efficient virus replication in macrophages. The sequence is that of Protein MGF 110-6L from African swine fever virus (strain Badajoz 1971 Vero-adapted) (Ba71V).